An 883-amino-acid chain; its full sequence is Alanine--tRNA ligase (883 aa).

Zn(2+)-binding residues include His-564, His-568, Cys-666, and His-670.

The protein belongs to the class-II aminoacyl-tRNA synthetase family. The cofactor is Zn(2+).

It localises to the cytoplasm. The catalysed reaction is tRNA(Ala) + L-alanine + ATP = L-alanyl-tRNA(Ala) + AMP + diphosphate. Functionally, catalyzes the attachment of alanine to tRNA(Ala) in a two-step reaction: alanine is first activated by ATP to form Ala-AMP and then transferred to the acceptor end of tRNA(Ala). Also edits incorrectly charged Ser-tRNA(Ala) and Gly-tRNA(Ala) via its editing domain. The polypeptide is Alanine--tRNA ligase (Synechococcus sp. (strain JA-3-3Ab) (Cyanobacteria bacterium Yellowstone A-Prime)).